A 332-amino-acid chain; its full sequence is 2,3-diketo-L-gulonate reductase (332 aa).

Residue histidine 44 is the Proton donor of the active site. NAD(+) contacts are provided by residues 168–174 (ITMVDMS), 224–225 (WK), and 304–306 (GHE).

It belongs to the LDH2/MDH2 oxidoreductase family. DlgD subfamily. As to quaternary structure, homodimer.

The protein localises to the cytoplasm. It carries out the reaction 3-dehydro-L-gulonate + NAD(+) = 2,3-dioxo-L-gulonate + NADH + H(+). The catalysed reaction is 3-dehydro-L-gulonate + NADP(+) = 2,3-dioxo-L-gulonate + NADPH + H(+). In terms of biological role, catalyzes the reduction of 2,3-diketo-L-gulonate in the presence of NADH, to form 3-keto-L-gulonate. In Salmonella paratyphi B (strain ATCC BAA-1250 / SPB7), this protein is 2,3-diketo-L-gulonate reductase.